A 507-amino-acid chain; its full sequence is Maturase K (507 aa).

Belongs to the intron maturase 2 family. MatK subfamily.

Its subcellular location is the plastid. The protein localises to the chloroplast. Usually encoded in the trnK tRNA gene intron. Probably assists in splicing its own and other chloroplast group II introns. The chain is Maturase K from Lyonia ligustrina (Maleberry).